Here is a 268-residue protein sequence, read N- to C-terminus: GTP cyclohydrolase 1 type 2 homolog (268 aa).

A divalent metal cation-binding residues include His-66, His-67, Asp-105, His-227, and Glu-231.

This sequence belongs to the GTP cyclohydrolase I type 2/NIF3 family. In terms of assembly, homohexamer.

In Clostridium acetobutylicum (strain ATCC 824 / DSM 792 / JCM 1419 / IAM 19013 / LMG 5710 / NBRC 13948 / NRRL B-527 / VKM B-1787 / 2291 / W), this protein is GTP cyclohydrolase 1 type 2 homolog.